We begin with the raw amino-acid sequence, 230 residues long: MENQPKLNSTKEVIAFLAERFPLCFSAEGEARPLKIGIFQDLVERVQGEMSLSKTQLRSALRLYTSSWRYLYGIKAGAIRVDLDGNACGQLDEQHVEHARKQLEEAKARVQAQREQHQAKKREAGEATAPRRPRKPARKPAAEGEQSRSVSGKPSRPQAARPASAPRAESRVEQRKPVTDTTALQVGQSIKVTAGKNAMDATILEISKDGVRVQLASGLAMIVRAEHLQF.

Over residues Glu105 to Gly125 the composition is skewed to basic and acidic residues. The tract at residues Glu105–Thr182 is disordered. Over residues Pro154–Arg167 the composition is skewed to low complexity. The span at Ala168–Val178 shows a compositional bias: basic and acidic residues.

This sequence belongs to the ProQ family.

The protein localises to the cytoplasm. Functionally, RNA chaperone with significant RNA binding, RNA strand exchange and RNA duplexing activities. May regulate ProP activity through an RNA-based, post-transcriptional mechanism. The protein is RNA chaperone ProQ of Erwinia tasmaniensis (strain DSM 17950 / CFBP 7177 / CIP 109463 / NCPPB 4357 / Et1/99).